A 361-amino-acid chain; its full sequence is Uroporphyrinogen decarboxylase (361 aa).

Substrate contacts are provided by residues 27–31, Asp-77, Tyr-154, Thr-209, and His-327; that span reads RQAGR.

The protein belongs to the uroporphyrinogen decarboxylase family. In terms of assembly, homodimer.

Its subcellular location is the cytoplasm. It catalyses the reaction uroporphyrinogen III + 4 H(+) = coproporphyrinogen III + 4 CO2. It functions in the pathway porphyrin-containing compound metabolism; protoporphyrin-IX biosynthesis; coproporphyrinogen-III from 5-aminolevulinate: step 4/4. In terms of biological role, catalyzes the decarboxylation of four acetate groups of uroporphyrinogen-III to yield coproporphyrinogen-III. The sequence is that of Uroporphyrinogen decarboxylase from Coxiella burnetii (strain Dugway 5J108-111).